The chain runs to 318 residues: Pantothenate kinase (318 aa).

96–103 (GSVAVGKS) is an ATP binding site.

This sequence belongs to the prokaryotic pantothenate kinase family.

The protein resides in the cytoplasm. It catalyses the reaction (R)-pantothenate + ATP = (R)-4'-phosphopantothenate + ADP + H(+). It functions in the pathway cofactor biosynthesis; coenzyme A biosynthesis; CoA from (R)-pantothenate: step 1/5. The sequence is that of Pantothenate kinase from Rhodopseudomonas palustris (strain BisB5).